A 616-amino-acid chain; its full sequence is FNIP repeat-containing protein DDB_G0290639 (616 aa).

Positions 239–274 form a coiled coil; it reads FENNNNNNNNNNNNNNNNNNNNNNNNNNNNNKKTEK. Positions 241–269 are enriched in low complexity; sequence NNNNNNNNNNNNNNNNNNNNNNNNNNNNN. The interval 241-270 is disordered; sequence NNNNNNNNNNNNNNNNNNNNNNNNNNNNNK. FNIP repeat units lie at residues 337-379, 380-421, 423-464, 466-508, 509-550, and 552-593; these read FEES…FNDG, FNQS…KLCN, FSQP…VFYD, FNQL…FSDG, FNQT…LIDS, and FQQP…ILDK.

This is FNIP repeat-containing protein DDB_G0290639 from Dictyostelium discoideum (Social amoeba).